Consider the following 332-residue polypeptide: Glycerol-3-phosphate dehydrogenase [NAD(P)+] (332 aa).

Trp11, Arg30, and Lys108 together coordinate NADPH. Sn-glycerol 3-phosphate contacts are provided by Lys108, Gly137, and Ser139. Ala141 provides a ligand contact to NADPH. 5 residues coordinate sn-glycerol 3-phosphate: Lys192, Asp245, Ser255, Arg256, and Asn257. The active-site Proton acceptor is Lys192. Residue Arg256 participates in NADPH binding. NADPH-binding residues include Val280 and Glu282.

The protein belongs to the NAD-dependent glycerol-3-phosphate dehydrogenase family.

Its subcellular location is the cytoplasm. It carries out the reaction sn-glycerol 3-phosphate + NAD(+) = dihydroxyacetone phosphate + NADH + H(+). The enzyme catalyses sn-glycerol 3-phosphate + NADP(+) = dihydroxyacetone phosphate + NADPH + H(+). It functions in the pathway membrane lipid metabolism; glycerophospholipid metabolism. Functionally, catalyzes the reduction of the glycolytic intermediate dihydroxyacetone phosphate (DHAP) to sn-glycerol 3-phosphate (G3P), the key precursor for phospholipid synthesis. The protein is Glycerol-3-phosphate dehydrogenase [NAD(P)+] of Burkholderia cenocepacia (strain ATCC BAA-245 / DSM 16553 / LMG 16656 / NCTC 13227 / J2315 / CF5610) (Burkholderia cepacia (strain J2315)).